The chain runs to 319 residues: Capsid protein (319 aa).

Its subcellular location is the virion. The capsid protein self-assembles to form an icosahedral capsid with a T=2 symmetry made of 120 subunits. The protein is Capsid protein of Cryptosporidium parvum virus 1 (strain KSU-1).